The chain runs to 147 residues: Large ribosomal subunit protein uL11 (147 aa).

The protein belongs to the universal ribosomal protein uL11 family. In terms of assembly, part of the ribosomal stalk of the 50S ribosomal subunit. Interacts with L10 and the large rRNA to form the base of the stalk. L10 forms an elongated spine to which L12 dimers bind in a sequential fashion forming a multimeric L10(L12)X complex. One or more lysine residues are methylated.

Functionally, forms part of the ribosomal stalk which helps the ribosome interact with GTP-bound translation factors. This is Large ribosomal subunit protein uL11 from Phocaeicola vulgatus (strain ATCC 8482 / DSM 1447 / JCM 5826 / CCUG 4940 / NBRC 14291 / NCTC 11154) (Bacteroides vulgatus).